A 517-amino-acid polypeptide reads, in one-letter code: Aspartyl/glutamyl-tRNA(Asn/Gln) amidotransferase subunit B (517 aa).

It belongs to the GatB/GatE family. GatB subfamily. Heterotrimer of A, B and C subunits.

It catalyses the reaction L-glutamyl-tRNA(Gln) + L-glutamine + ATP + H2O = L-glutaminyl-tRNA(Gln) + L-glutamate + ADP + phosphate + H(+). It carries out the reaction L-aspartyl-tRNA(Asn) + L-glutamine + ATP + H2O = L-asparaginyl-tRNA(Asn) + L-glutamate + ADP + phosphate + 2 H(+). Functionally, allows the formation of correctly charged Asn-tRNA(Asn) or Gln-tRNA(Gln) through the transamidation of misacylated Asp-tRNA(Asn) or Glu-tRNA(Gln) in organisms which lack either or both of asparaginyl-tRNA or glutaminyl-tRNA synthetases. The reaction takes place in the presence of glutamine and ATP through an activated phospho-Asp-tRNA(Asn) or phospho-Glu-tRNA(Gln). The polypeptide is Aspartyl/glutamyl-tRNA(Asn/Gln) amidotransferase subunit B (Thermobifida fusca (strain YX)).